The chain runs to 201 residues: 3-isopropylmalate dehydratase small subunit (201 aa).

This sequence belongs to the LeuD family. LeuD type 1 subfamily. Heterodimer of LeuC and LeuD.

The catalysed reaction is (2R,3S)-3-isopropylmalate = (2S)-2-isopropylmalate. It participates in amino-acid biosynthesis; L-leucine biosynthesis; L-leucine from 3-methyl-2-oxobutanoate: step 2/4. Its function is as follows. Catalyzes the isomerization between 2-isopropylmalate and 3-isopropylmalate, via the formation of 2-isopropylmaleate. The sequence is that of 3-isopropylmalate dehydratase small subunit from Nitrobacter hamburgensis (strain DSM 10229 / NCIMB 13809 / X14).